A 381-amino-acid polypeptide reads, in one-letter code: Alkanesulfonate monooxygenase (381 aa).

It belongs to the SsuD family. Homotetramer.

It catalyses the reaction an alkanesulfonate + FMNH2 + O2 = an aldehyde + FMN + sulfite + H2O + 2 H(+). In terms of biological role, catalyzes the desulfonation of aliphatic sulfonates. The protein is Alkanesulfonate monooxygenase of Escherichia fergusonii (strain ATCC 35469 / DSM 13698 / CCUG 18766 / IAM 14443 / JCM 21226 / LMG 7866 / NBRC 102419 / NCTC 12128 / CDC 0568-73).